The primary structure comprises 1810 residues: Trinucleotide repeat-containing gene 6B protein (1810 aa).

Residues 1–22 (MQTNEGEVEEESSSQVEQEDFV) show a composition bias toward acidic residues. Disordered regions lie at residues 1-221 (MQTN…PNPI), 235-1080 (EEWP…KKQM), 1141-1196 (MRKD…SSPG), and 1293-1329 (ALQQ…NMVP). A coiled-coil region spans residues 33–75 (GEESKQEKEQEREEQLMEDKKRKKEDKKKKEATQKVTEQKTKV). Composition is skewed to basic and acidic residues over residues 34-52 (EESK…MEDK) and 60-77 (KKKE…KVPE). The tract at residues 37-1028 (KQEKEQEREE…AMKPNSKSMQ (992 aa)) is interaction with argonaute proteins. The span at 88–106 (AASPIGSSPSPPVNGGNNA) shows a compositional bias: low complexity. Residues 123-139 (MPREVPPRFRCQQDHKV) show a composition bias toward basic and acidic residues. Low complexity predominate over residues 165 to 174 (APGANPNNNA). Polar residues predominate over residues 180 to 190 (LLQSESGTAPE). 2 stretches are compositionally biased toward low complexity: residues 207-220 (GPGA…SPNP) and 248-260 (SSEN…SASN). Polar residues-rich tracts occupy residues 261–290 (PGSE…SGNE) and 306–327 (QPPN…TSGQ). 3 stretches are compositionally biased toward low complexity: residues 335–346 (GFSNFNPNSNPS), 363–380 (ETES…GQAS), and 416–425 (NSLNLSSPNP). The span at 438-451 (GNTSRSTDAPSQST) shows a compositional bias: polar residues. A compositionally biased stretch (low complexity) spans 475–486 (SGQSNSGNNGNN). 4 stretches are compositionally biased toward polar residues: residues 504–528 (GSKS…PQDN), 564–575 (GPNQPNSSTGAW), 611–623 (TGSN…SDSH), and 655–667 (LSNT…QIKQ). Over residues 675-688 (EVPRPEGKSDKGTE) the composition is skewed to basic and acidic residues. Composition is skewed to polar residues over residues 774 to 783 (QPNQGWTSGK) and 793 to 804 (VKNNNWESSANK). The span at 809–824 (WGEGGQNEIGTWGNGG) shows a compositional bias: gly residues. Residues 846–857 (TGRQPNSWNKQH) are compositionally biased toward polar residues. Ser913 is subject to Phosphoserine. Polar residues-rich tracts occupy residues 934 to 950 (NSYN…NSQG), 964 to 975 (TGKSASVWSKST), 1004 to 1027 (ASTT…SKSM), 1057 to 1072 (TAGS…SASW), and 1175 to 1195 (GNST…SSSP). Residues 1191 to 1700 (LSSSPGLRAQ…LAEFATEDEV (510 aa)) are silencing domain; interaction with CNOT1 and PAN3. Positions 1295 to 1307 (QQQQQQQQQQQRQ) are enriched in low complexity. At Ser1409 the chain carries Phosphoserine. The residue at position 1426 (Thr1426) is a Phosphothreonine. Phosphoserine is present on Ser1438. At Thr1441 the chain carries Phosphothreonine. Positions 1449–1467 (SNASWPPEFQPGVPWKGIQ) are PABPC1-interacting motif-2 (PAM2). The tract at residues 1568–1619 (SSRNTTPLTRPPPGLTNPKPASPWSSTAPRSVRGWGTQDSRIASASTWSDGG) is disordered. Residues 1604–1617 (TQDSRIASASTWSD) are compositionally biased toward polar residues. The RRM domain occupies 1625-1697 (YWLVLHNLTP…TTILAEFATE (73 aa)). 2 disordered regions span residues 1706–1740 (QAQP…GPAL) and 1786–1810 (EDPH…SDSI). Positions 1722–1733 (GWQSLETSQNQA) are enriched in polar residues. A compositionally biased stretch (low complexity) spans 1792 to 1801 (GSPAPLLPGD). 2 positions are modified to phosphoserine: Ser1793 and Ser1809.

This sequence belongs to the GW182 family. In terms of assembly, interacts with AGO1, AGO2, AGO3 and AGO4. Interacts with CNOT1; the interaction mediates the association with the CCR4-NOT complex. Interacts with PAN3; the interaction mediates the association with the PAN complex. Interacts with MOV10; the interaction is direct and RNA-dependent.

Its subcellular location is the cytoplasm. The protein resides in the P-body. In terms of biological role, plays a role in RNA-mediated gene silencing by both micro-RNAs (miRNAs) and short interfering RNAs (siRNAs). Required for miRNA-dependent translational repression and siRNA-dependent endonucleolytic cleavage of complementary mRNAs by argonaute family proteins. As scaffolding protein associates with argonaute proteins bound to partially complementary mRNAs and simultaneously can recruit CCR4-NOT and PAN deadenylase complexes. The chain is Trinucleotide repeat-containing gene 6B protein (Tnrc6b) from Mus musculus (Mouse).